A 390-amino-acid polypeptide reads, in one-letter code: Aspartate carbamoyltransferase, chloroplastic (390 aa).

A chloroplast-targeting transit peptide spans 1 to 68 (MSIASSLTSA…NLTRNVGPVR (68 aa)). Residues Arg-136 and Thr-137 each coordinate carbamoyl phosphate. Residues Arg-136 and Thr-137 each coordinate UMP. An L-aspartate-binding site is contributed by Lys-166. Carbamoyl phosphate contacts are provided by Arg-187, His-215, and Gln-218. 2 residues coordinate UMP: Arg-187 and His-215. 2 residues coordinate UMP: Arg-248 and Arg-310. L-aspartate-binding residues include Arg-248 and Arg-310. 2 residues coordinate carbamoyl phosphate: Leu-350 and Pro-351.

It belongs to the aspartate/ornithine carbamoyltransferase superfamily. ATCase family. Homotrimer.

It is found in the plastid. The protein localises to the chloroplast. It catalyses the reaction carbamoyl phosphate + L-aspartate = N-carbamoyl-L-aspartate + phosphate + H(+). It functions in the pathway pyrimidine metabolism; UMP biosynthesis via de novo pathway; (S)-dihydroorotate from bicarbonate: step 2/3. Its activity is regulated as follows. Feedback inhibited by UMP. Its function is as follows. Catalyzes the condensation of carbamoyl phosphate and aspartate to form carbamoyl aspartate and inorganic phosphate, the committed step in the de novo pyrimidine nucleotide biosynthesis pathway. This chain is Aspartate carbamoyltransferase, chloroplastic (PYRB), found in Arabidopsis thaliana (Mouse-ear cress).